We begin with the raw amino-acid sequence, 153 residues long: Probable trafficking protein particle complex subunit 2 (153 aa).

Belongs to the TRAPP small subunits family. Sedlin subfamily. As to quaternary structure, part of the multisubunit TRAPP (transport protein particle) complex.

It localises to the cytoplasm. The protein localises to the perinuclear region. It is found in the endoplasmic reticulum. Its subcellular location is the golgi apparatus. Functionally, may play a role in vesicular transport from endoplasmic reticulum to Golgi. This is Probable trafficking protein particle complex subunit 2 from Nematostella vectensis (Starlet sea anemone).